Consider the following 363-residue polypeptide: Flagellar P-ring protein (363 aa).

An N-terminal signal peptide occupies residues 1–20 (MKIKLILACALMVFSAASSA).

It belongs to the FlgI family. In terms of assembly, the basal body constitutes a major portion of the flagellar organelle and consists of four rings (L,P,S, and M) mounted on a central rod.

It localises to the periplasm. Its subcellular location is the bacterial flagellum basal body. Assembles around the rod to form the L-ring and probably protects the motor/basal body from shearing forces during rotation. This Shewanella loihica (strain ATCC BAA-1088 / PV-4) protein is Flagellar P-ring protein.